A 566-amino-acid chain; its full sequence is Hemocyanin B chain (566 aa).

Cysteine 82 and cysteine 87 form a disulfide bridge. Residues histidine 183, histidine 187, histidine 213, histidine 309, histidine 313, and histidine 347 each coordinate Cu cation.

The protein belongs to the tyrosinase family. Hemocyanin subfamily. In terms of tissue distribution, hemolymph.

The protein resides in the secreted. It is found in the extracellular space. Hemocyanins are copper-containing oxygen carriers occurring freely dissolved in the hemolymph of many mollusks and arthropods. This Astacus leptodactylus (Turkish narrow-clawed crayfish) protein is Hemocyanin B chain.